A 90-amino-acid chain; its full sequence is Bombyxin B-7 (90 aa).

Positions 1–20 are cleaved as a signal peptide; sequence MMKTSVMLMLVVVISLMCSG. 3 disulfides stabilise this stretch: cysteine 30–cysteine 76, cysteine 42–cysteine 89, and cysteine 75–cysteine 80. The propeptide at 49-67 is c peptide like; that stretch reads GGAQYAPYFWTRQYLGSRG.

This sequence belongs to the insulin family. As to quaternary structure, heterodimer of a B chain and an A chain linked by two disulfide bonds.

Its subcellular location is the secreted. Its function is as follows. Brain peptide responsible for activation of prothoracic glands to produce ecdysone in insects. This is Bombyxin B-7 (BBXB7) from Bombyx mori (Silk moth).